Reading from the N-terminus, the 280-residue chain is Thylakoid lumenal protein TL20.3, chloroplastic (280 aa).

Residues 1-59 (MAFSSLSPLPMKSLDISRSSSSVSRSPYHFQRYLLRRLQLSSRSNLEIKDSSNTREGCC) constitute a chloroplast transit peptide. The N-terminal 31 residues, 60-90 (SSAESNTWKRILSAAMAAAVIASSSGVPAMA), are a transit peptide targeting the thylakoid. Pentapeptide repeat domains are found at residues 124-163 (ENFRRANFTSADMRESDFSGSTFNGAYLEKAVAYKANFSG) and 169-208 (TLMDRMVLNEANLTNAVLVRSVLTRSDLGGAKIEGADFSD).

Interacts with thioredoxin. Interacts in vitro with LTO1.

It is found in the plastid. Its subcellular location is the chloroplast thylakoid lumen. Functionally, pentapeptide repeat protein of unknown function. Subject to degradation when reduced. The polypeptide is Thylakoid lumenal protein TL20.3, chloroplastic (Arabidopsis thaliana (Mouse-ear cress)).